The chain runs to 208 residues: Outer-membrane lipoprotein carrier protein (208 aa).

Positions 1–22 (MRKTLTALMLSLPLLTPHMAFA) are cleaved as a signal peptide.

Belongs to the LolA family. In terms of assembly, monomer.

The protein resides in the periplasm. Its function is as follows. Participates in the translocation of lipoproteins from the inner membrane to the outer membrane. Only forms a complex with a lipoprotein if the residue after the N-terminal Cys is not an aspartate (The Asp acts as a targeting signal to indicate that the lipoprotein should stay in the inner membrane). This Shewanella woodyi (strain ATCC 51908 / MS32) protein is Outer-membrane lipoprotein carrier protein.